Consider the following 244-residue polypeptide: NAD reductase coq12 (244 aa).

Residues 131-158 form a disordered region; that stretch reads NPLMNSEKNSTSVEDLPGSNRTQQTSSH. The span at 132–158 shows a compositional bias: polar residues; it reads PLMNSEKNSTSVEDLPGSNRTQQTSSH.

The protein localises to the mitochondrion. It catalyses the reaction a reduced flavin + NAD(+) = an oxidized flavin + NADH + 2 H(+). Functionally, NADH-dependent flavin reductase that acts in the coenzyme Q biosynthetic pathway. Required for synthesis of the p-hydroxybenzoic acid (PHB) precursor to form a quinone backbone. The sequence is that of NAD reductase coq12 from Schizosaccharomyces pombe (strain 972 / ATCC 24843) (Fission yeast).